The primary structure comprises 258 residues: Pimeloyl-[acyl-carrier protein] methyl ester esterase (258 aa).

The 229-residue stretch at 16–244 (LVLVHGWGMN…QSSHAPFMTE (229 aa)) folds into the AB hydrolase-1 domain. Substrate is bound by residues tryptophan 22, 82-83 (SL), and 146-150 (FMALQ). Serine 82 (nucleophile) is an active-site residue. Residues aspartate 210 and histidine 238 contribute to the active site. Histidine 238 is a substrate binding site.

Belongs to the AB hydrolase superfamily. Carboxylesterase BioH family. In terms of assembly, monomer.

The protein localises to the cytoplasm. The catalysed reaction is 6-carboxyhexanoyl-[ACP] methyl ester + H2O = 6-carboxyhexanoyl-[ACP] + methanol + H(+). Its pathway is cofactor biosynthesis; biotin biosynthesis. The physiological role of BioH is to remove the methyl group introduced by BioC when the pimeloyl moiety is complete. It allows to synthesize pimeloyl-ACP via the fatty acid synthetic pathway through the hydrolysis of the ester bonds of pimeloyl-ACP esters. In Vibrio atlanticus (strain LGP32) (Vibrio splendidus (strain Mel32)), this protein is Pimeloyl-[acyl-carrier protein] methyl ester esterase.